The sequence spans 365 residues: Protein BZR1 homolog 2 (365 aa).

The segment covering 1–30 (MATGGGGGGGGMGGGGVGGGAGAAGVGVGG) has biased composition (gly residues). 4 disordered regions span residues 1–45 (MATG…KRRE), 113–154 (SPSP…NMAN), 191–236 (SAPV…TPPS), and 344–365 (HEDS…RAAA). The segment at 31–113 (RMPTWREREN…RMEVIGCSVS (83 aa)) is required for DNA-binding. The span at 113 to 144 (SPSPCSSYQPSPRASYNASPTSSSFPSGASSP) shows a compositional bias: low complexity. Polar residues-rich tracts occupy residues 215–233 (SNVQ…VNST) and 356–365 (LGSSRTRAAA).

It belongs to the BZR/LAT61 family. Interacts with PUB24.

Functionally, may function in brassinosteroid signaling. In Oryza sativa subsp. japonica (Rice), this protein is Protein BZR1 homolog 2.